A 173-amino-acid chain; its full sequence is Protein TraS (173 aa).

The protein resides in the cell inner membrane. Its function is as follows. Involved in surface exclusion. The polypeptide is Protein TraS (traS) (Escherichia coli (strain K12)).